We begin with the raw amino-acid sequence, 69 residues long: Large ribosomal subunit protein uL29 (69 aa).

Belongs to the universal ribosomal protein uL29 family.

The sequence is that of Large ribosomal subunit protein uL29 from Sulfolobus acidocaldarius (strain ATCC 33909 / DSM 639 / JCM 8929 / NBRC 15157 / NCIMB 11770).